The following is a 415-amino-acid chain: ATP-dependent RNA helicase RhlB (415 aa).

The Q motif signature appears at 9–37; sequence QRFSALPLHPIVRGALAKKGFDFCTPIQA. The 179-residue stretch at 40-218 folds into the Helicase ATP-binding domain; that stretch reads LPISLNGRDV…FEDMNDPEYI (179 aa). ATP is bound at residue 53–60; that stretch reads AQTGTGKT. A DEAD box motif is present at residues 164 to 167; it reads DEAD. A Helicase C-terminal domain is found at 241–389; sequence DKMALLLTLM…VSQYETEALL (149 aa).

Belongs to the DEAD box helicase family. RhlB subfamily. Component of the RNA degradosome, which is a multiprotein complex involved in RNA processing and mRNA degradation.

Its subcellular location is the cytoplasm. The enzyme catalyses ATP + H2O = ADP + phosphate + H(+). Its function is as follows. DEAD-box RNA helicase involved in RNA degradation. Has RNA-dependent ATPase activity and unwinds double-stranded RNA. This chain is ATP-dependent RNA helicase RhlB, found in Haemophilus influenzae (strain PittGG).